A 295-amino-acid polypeptide reads, in one-letter code: GTP-binding protein GEM (295 aa).

Residues 39 to 64 (CNLRNRHSTAPEEHCRRSWSSDSTDS) form a disordered region. Residues 81 to 88 (GEQGVGKS) and 190 to 193 (NKSD) each bind GTP. The interval 265–284 (ARRFWGKIVAKNNKNMAFKL) is calmodulin-binding.

Belongs to the small GTPase superfamily. RGK family. As to quaternary structure, interacts with calmodulin in a Ca(2+)-dependent manner. Calmodulin binding significantly decreases GTP binding. Binds ROCK1. Post-translationally, phosphorylated on tyrosine residues.

The protein localises to the cell membrane. In terms of biological role, could be a regulatory protein, possibly participating in receptor-mediated signal transduction at the plasma membrane. Has guanine nucleotide-binding activity but undetectable intrinsic GTPase activity. The sequence is that of GTP-binding protein GEM (Gem) from Mus musculus (Mouse).